We begin with the raw amino-acid sequence, 335 residues long: Vitamin B12 import system permease protein BtuC (335 aa).

The next 9 membrane-spanning stretches (helical) occupy residues 21–43 (FLAI…GENW), 63–82 (FPRV…AGAV), 95–114 (GLLG…VLMF), 119–141 (PFWL…LLTF), 153–175 (LLVG…YFST), 195–212 (WRHQ…IWLS), 244–266 (FAVG…IGLV), 281–303 (TLLP…LSRL), and 310–329 (VPIG…WLLL).

It belongs to the binding-protein-dependent transport system permease family. FecCD subfamily. As to quaternary structure, the complex is composed of two ATP-binding proteins (BtuD), two transmembrane proteins (BtuC) and a solute-binding protein (BtuF).

It is found in the cell inner membrane. Functionally, part of the ABC transporter complex BtuCDF involved in vitamin B12 import. Involved in the translocation of the substrate across the membrane. This Photorhabdus laumondii subsp. laumondii (strain DSM 15139 / CIP 105565 / TT01) (Photorhabdus luminescens subsp. laumondii) protein is Vitamin B12 import system permease protein BtuC.